We begin with the raw amino-acid sequence, 234 residues long: Triosephosphate isomerase (234 aa).

Position 8-10 (8-10) interacts with substrate; the sequence is NFK. Residue His-90 is the Electrophile of the active site. Glu-159 serves as the catalytic Proton acceptor. Residues Gly-165 and Ser-197 each coordinate substrate.

Belongs to the triosephosphate isomerase family. In terms of assembly, homodimer.

Its subcellular location is the cytoplasm. The catalysed reaction is D-glyceraldehyde 3-phosphate = dihydroxyacetone phosphate. Its pathway is carbohydrate biosynthesis; gluconeogenesis. It functions in the pathway carbohydrate degradation; glycolysis; D-glyceraldehyde 3-phosphate from glycerone phosphate: step 1/1. Functionally, involved in the gluconeogenesis. Catalyzes stereospecifically the conversion of dihydroxyacetone phosphate (DHAP) to D-glyceraldehyde-3-phosphate (G3P). The polypeptide is Triosephosphate isomerase (Helicobacter pylori (strain Shi470)).